We begin with the raw amino-acid sequence, 101 residues long: MSQKIRIKLKSYDHMLVDKSAEKIVKTVKSTGAVVTGPIPLPTHKKLFTVLRSPHVNKKAREQFEVMSYKRLIDIYSSSSKTIDALMKLELPSGVEVEIKV.

The protein belongs to the universal ribosomal protein uS10 family. As to quaternary structure, part of the 30S ribosomal subunit.

Involved in the binding of tRNA to the ribosomes. The sequence is that of Small ribosomal subunit protein uS10 from Flavobacterium psychrophilum (strain ATCC 49511 / DSM 21280 / CIP 103535 / JIP02/86).